A 404-amino-acid polypeptide reads, in one-letter code: CCA-adding enzyme (404 aa).

Residues Gly-27 and Arg-30 each coordinate ATP. Residues Gly-27 and Arg-30 each contribute to the CTP site. Mg(2+)-binding residues include Asp-40 and Asp-42. Arg-111, Asp-154, Arg-157, Arg-160, and Arg-163 together coordinate ATP. CTP-binding residues include Arg-111, Asp-154, Arg-157, Arg-160, and Arg-163.

Belongs to the tRNA nucleotidyltransferase/poly(A) polymerase family. Bacterial CCA-adding enzyme type 3 subfamily. Homodimer. Mg(2+) is required as a cofactor.

The catalysed reaction is a tRNA precursor + 2 CTP + ATP = a tRNA with a 3' CCA end + 3 diphosphate. The enzyme catalyses a tRNA with a 3' CCA end + 2 CTP + ATP = a tRNA with a 3' CCACCA end + 3 diphosphate. Functionally, catalyzes the addition and repair of the essential 3'-terminal CCA sequence in tRNAs without using a nucleic acid template. Adds these three nucleotides in the order of C, C, and A to the tRNA nucleotide-73, using CTP and ATP as substrates and producing inorganic pyrophosphate. tRNA 3'-terminal CCA addition is required both for tRNA processing and repair. Also involved in tRNA surveillance by mediating tandem CCA addition to generate a CCACCA at the 3' terminus of unstable tRNAs. While stable tRNAs receive only 3'-terminal CCA, unstable tRNAs are marked with CCACCA and rapidly degraded. The chain is CCA-adding enzyme from Geobacillus sp. (strain WCH70).